The sequence spans 310 residues: MQWMEIKIVFDAAEPELAQEMVSYLVMEHGAEGLEMTTPGETGMVQDGSGSSVPDSKEHSVTAFLPLDDLFEGRKADLTRALDDLKGSVLTDYSVHFSKQDDQPWETAWKAHFHPIEIGESLVIKPSWEDYENPEKRMLIELDPGMAFGTGTHPTTAVCLEMIETECLKKAPERFLDVGTGSGILMIGAYKLGARKVFGCDNDMDALEAAAKNLKGNQVHEGDFGLWLGDLLAGIVEGAFDMVAANITAEANVMLIPGLPRIMAPGSIFIASGIMAEKKDLVLEALDACRFSVERVQETGGWVGIAARMP.

Positions 156, 179, 201, and 246 each coordinate S-adenosyl-L-methionine.

This sequence belongs to the methyltransferase superfamily. PrmA family.

Its subcellular location is the cytoplasm. It catalyses the reaction L-lysyl-[protein] + 3 S-adenosyl-L-methionine = N(6),N(6),N(6)-trimethyl-L-lysyl-[protein] + 3 S-adenosyl-L-homocysteine + 3 H(+). Methylates ribosomal protein L11. The chain is Ribosomal protein L11 methyltransferase from Desulfatibacillum aliphaticivorans.